The primary structure comprises 193 residues: Acyl carrier protein phosphodiesterase (193 aa).

It belongs to the AcpH family.

It catalyses the reaction holo-[ACP] + H2O = apo-[ACP] + (R)-4'-phosphopantetheine + H(+). Converts holo-ACP to apo-ACP by hydrolytic cleavage of the phosphopantetheine prosthetic group from ACP. The protein is Acyl carrier protein phosphodiesterase of Shigella boydii serotype 18 (strain CDC 3083-94 / BS512).